An 89-amino-acid polypeptide reads, in one-letter code: Snake venom serine protease rhinocerase (89 aa).

One can recognise a Peptidase S1 domain in the interval 1–89; the sequence is VIGGAECDIN…KVFDYIPWIK (89 aa). The active-site Charge relay system is Asp45. Cys64 and Cys69 are joined by a disulfide.

The protein belongs to the peptidase S1 family. Snake venom subfamily. Glycosylated. In terms of tissue distribution, expressed by the venom gland.

The protein localises to the secreted. Its activity is regulated as follows. Inhibited by PMSF. Not inhibited by benzamidine. Functionally, snake venom serine protease that cleaves fibrinogen alpha and beta chains (FGA and FGB), but not gamma chains. Exhibits fibrinolytic and kininogenolytic. Preferentially cleaves after Arg and Lys residues. This chain is Snake venom serine protease rhinocerase, found in Bitis rhinoceros (West African gaboon viper).